We begin with the raw amino-acid sequence, 406 residues long: Phosphopentomutase (406 aa).

Positions 10, 305, 310, 346, 347, and 358 each coordinate Mn(2+).

Belongs to the phosphopentomutase family. Requires Mn(2+) as cofactor.

It localises to the cytoplasm. The enzyme catalyses 2-deoxy-alpha-D-ribose 1-phosphate = 2-deoxy-D-ribose 5-phosphate. The catalysed reaction is alpha-D-ribose 1-phosphate = D-ribose 5-phosphate. Its pathway is carbohydrate degradation; 2-deoxy-D-ribose 1-phosphate degradation; D-glyceraldehyde 3-phosphate and acetaldehyde from 2-deoxy-alpha-D-ribose 1-phosphate: step 1/2. Functionally, isomerase that catalyzes the conversion of deoxy-ribose 1-phosphate (dRib-1-P) and ribose 1-phosphate (Rib-1-P) to deoxy-ribose 5-phosphate (dRib-5-P) and ribose 5-phosphate (Rib-5-P), respectively. The protein is Phosphopentomutase of Rhizobium johnstonii (strain DSM 114642 / LMG 32736 / 3841) (Rhizobium leguminosarum bv. viciae).